A 306-amino-acid polypeptide reads, in one-letter code: MDQLEERGHLLTEQINPKSRNLDQLTPLELVDLFNQEDAQTLRAIAQARQELAQAIEITAQALGRGGRLFYVGAGTSGRLGVLDAAECPPTFCTHPDLVQGIIAGGAAALVRSSENLEDRPEDGASAIAQRHIIDKDVVVGISAGGTTPFVHGAIEAAKQRGAKTIAMSCVPIEQVPIIVDIDIRLLTGPEILAGSTRLKAGTVTKMALNILSTGVMVCLGKVYGNRMVDVSVTNRKLHDRALRMLQDLTDLSREEAGFLLERSGRKVKLALLMHWTGLDAQMGQELLNNYHGNLRNAVQGYKTNV.

The SIS domain occupies 59-222 (TAQALGRGGR…STGVMVCLGK (164 aa)). Glu-87 (proton donor) is an active-site residue. The active site involves Glu-118.

It belongs to the GCKR-like family. MurNAc-6-P etherase subfamily. In terms of assembly, homodimer.

The enzyme catalyses N-acetyl-D-muramate 6-phosphate + H2O = N-acetyl-D-glucosamine 6-phosphate + (R)-lactate. Its pathway is amino-sugar metabolism; N-acetylmuramate degradation. Specifically catalyzes the cleavage of the D-lactyl ether substituent of MurNAc 6-phosphate, producing GlcNAc 6-phosphate and D-lactate. The polypeptide is N-acetylmuramic acid 6-phosphate etherase (Rippkaea orientalis (strain PCC 8801 / RF-1) (Cyanothece sp. (strain PCC 8801))).